Here is a 113-residue protein sequence, read N- to C-terminus: Nitrogenase-stabilizing/protective protein NifW (113 aa).

It belongs to the NifW family. As to quaternary structure, homotrimer; associates with NifD.

Its function is as follows. May protect the nitrogenase Fe-Mo protein from oxidative damage. This is Nitrogenase-stabilizing/protective protein NifW from Dechloromonas aromatica (strain RCB).